A 312-amino-acid chain; its full sequence is Protoheme IX farnesyltransferase (312 aa).

8 helical membrane-spanning segments follow: residues 34-54 (LVIFTALVGLMIAPGHVHPVL), 56-76 (FTAILCIAVGAGASGALNMAL), 119-139 (ALVNWYAGGLLAFTIFFYVVI), 152-172 (IVIGGAAGALPPVVAWAAATG), 179-199 (LLLFLIIFFWTPPHFWALALF), 225-245 (ILLYTIVLVAIAAAPWPLGYF), 247-267 (WVYGVTSLVLGAGMLVLAINV), and 283-303 (LFAFSILYLFALFAVLLLDVL).

It belongs to the UbiA prenyltransferase family. Protoheme IX farnesyltransferase subfamily.

Its subcellular location is the cell inner membrane. The enzyme catalyses heme b + (2E,6E)-farnesyl diphosphate + H2O = Fe(II)-heme o + diphosphate. Its pathway is porphyrin-containing compound metabolism; heme O biosynthesis; heme O from protoheme: step 1/1. Its function is as follows. Converts heme B (protoheme IX) to heme O by substitution of the vinyl group on carbon 2 of heme B porphyrin ring with a hydroxyethyl farnesyl side group. The chain is Protoheme IX farnesyltransferase from Nitrobacter hamburgensis (strain DSM 10229 / NCIMB 13809 / X14).